Reading from the N-terminus, the 386-residue chain is Na(+)/H(+) antiporter NhaA (386 aa).

Helical transmembrane passes span 10 to 30, 45 to 65, 84 to 104, 116 to 136, 142 to 162, 169 to 189, 261 to 281, 287 to 307, 323 to 343, and 358 to 378; these read EFSI…NVAP, LSFH…IAAV, LNPL…YLAL, GWGI…RLIF, VIAF…VIIA, VLPV…IAFI, IIVD…GFSA, WLVF…FALL, HLLV…FVAG, and GAIL…LLGI.

Belongs to the NhaA Na(+)/H(+) (TC 2.A.33) antiporter family.

The protein localises to the cell inner membrane. The catalysed reaction is Na(+)(in) + 2 H(+)(out) = Na(+)(out) + 2 H(+)(in). In terms of biological role, na(+)/H(+) antiporter that extrudes sodium in exchange for external protons. The protein is Na(+)/H(+) antiporter NhaA of Geotalea uraniireducens (strain Rf4) (Geobacter uraniireducens).